Reading from the N-terminus, the 137-residue chain is Nucleoside diphosphate kinase (137 aa).

Residues lysine 9, phenylalanine 57, arginine 85, threonine 91, arginine 102, and asparagine 112 each contribute to the ATP site. The Pros-phosphohistidine intermediate role is filled by histidine 115.

Belongs to the NDK family. Homotetramer. It depends on Mg(2+) as a cofactor.

Its subcellular location is the cytoplasm. It carries out the reaction a 2'-deoxyribonucleoside 5'-diphosphate + ATP = a 2'-deoxyribonucleoside 5'-triphosphate + ADP. The enzyme catalyses a ribonucleoside 5'-diphosphate + ATP = a ribonucleoside 5'-triphosphate + ADP. In terms of biological role, major role in the synthesis of nucleoside triphosphates other than ATP. The ATP gamma phosphate is transferred to the NDP beta phosphate via a ping-pong mechanism, using a phosphorylated active-site intermediate. This is Nucleoside diphosphate kinase from Wolinella succinogenes (strain ATCC 29543 / DSM 1740 / CCUG 13145 / JCM 31913 / LMG 7466 / NCTC 11488 / FDC 602W) (Vibrio succinogenes).